The following is a 104-amino-acid chain: Large ribosomal subunit protein bL21 (104 aa).

It belongs to the bacterial ribosomal protein bL21 family. Part of the 50S ribosomal subunit. Contacts protein L20.

This protein binds to 23S rRNA in the presence of protein L20. The polypeptide is Large ribosomal subunit protein bL21 (Tropheryma whipplei (strain TW08/27) (Whipple's bacillus)).